Here is a 508-residue protein sequence, read N- to C-terminus: Photosystem II CP47 reaction center protein (508 aa).

The next 6 membrane-spanning stretches (helical) occupy residues 21-36 (SVHL…WAGS), 101-115 (IILS…IWHW), 140-156 (GIHL…FGAF), 203-218 (IAAG…FHLS), 237-252 (VLSS…AFVV), and 457-472 (TFAL…HGAR).

This sequence belongs to the PsbB/PsbC family. PsbB subfamily. PSII is composed of 1 copy each of membrane proteins PsbA, PsbB, PsbC, PsbD, PsbE, PsbF, PsbH, PsbI, PsbJ, PsbK, PsbL, PsbM, PsbT, PsbX, PsbY, PsbZ, Psb30/Ycf12, at least 3 peripheral proteins of the oxygen-evolving complex and a large number of cofactors. It forms dimeric complexes. Binds multiple chlorophylls. PSII binds additional chlorophylls, carotenoids and specific lipids. is required as a cofactor.

The protein resides in the plastid. It localises to the chloroplast thylakoid membrane. In terms of biological role, one of the components of the core complex of photosystem II (PSII). It binds chlorophyll and helps catalyze the primary light-induced photochemical processes of PSII. PSII is a light-driven water:plastoquinone oxidoreductase, using light energy to abstract electrons from H(2)O, generating O(2) and a proton gradient subsequently used for ATP formation. The polypeptide is Photosystem II CP47 reaction center protein (Adiantum capillus-veneris (Maidenhair fern)).